The chain runs to 181 residues: Methanesulfonate monooxygenase hydroxylase subunit beta (181 aa).

Belongs to the bacterial ring-hydroxylating dioxygenase beta subunit family. As to quaternary structure, the MSA monooxygenase system consists of 4 proteins: the 2 subunits of the hydroxylase component (MsmA and MsmB), a ferredoxin (MsmC) and a ferredoxin reductase (MsmD). The hydroxylase component consists of a 3 alpha (MsmA) and 3 beta (MsmB) subunits.

The protein resides in the cytoplasm. The catalysed reaction is methanesulfonate + NADH + O2 = sulfite + formaldehyde + NAD(+) + H2O. MSAMO is inhibited by metal chelators (such as bathophenanthroline, bathocuprione, neocuprione, alpha-alpha-dipyridil and sodium EDTA) and by sodium azide, sodium arsenate and potassium cyanide. In terms of biological role, methanesulfonate monooxygenase (MSAMO) mediates the primary degradation of methanesulfonic acid (MSA) to produce formaldehyd and inorganic sulfite by initial hydroxylation of the carbon atom prior to spontaneous cleavage of the unstable hydroxymethanesulfonic acid. MSAMO has a restricted substrate range that includes only the short-chain aliphatic sulfonates (methane- to butanesulfonate) and excludes all larger molecules, such as arylsulfonates and aromatic sulfonates. All MSAMO components are required for enzyme activity. This chain is Methanesulfonate monooxygenase hydroxylase subunit beta, found in Methylosulfonomonas methylovora.